The sequence spans 70 residues: Myotoxin (70 aa).

The first 22 residues, 1-22, serve as a signal peptide directing secretion; it reads MKILYLLFAFLFLAFLSEPGNA. 3 disulfide bridges follow: C26-C58, C33-C52, and C40-C59.

The protein belongs to the crotamine-myotoxin family. As to quaternary structure, monomer. Expressed by the venom gland.

It is found in the secreted. In terms of biological role, cationic peptide that possesses multiple functions. It acts as a cell-penetrating peptide (CPP), and as a potent voltage-gated potassium channel (Kv) inhibitor. It exhibits antimicrobial activities, hind limb paralysis, and severe muscle necrosis by a non-enzymatic mechanism. This chain is Myotoxin, found in Crotalus helleri (Southern pacific rattlesnake).